Reading from the N-terminus, the 469-residue chain is Putative F-box/LRR-repeat protein At5g02930 (469 aa).

In terms of domain architecture, F-box spans 27-77; the sequence is VDSISDLPDAVLQHIFSYIPTELAIRTSVLSKRWRHVWSETPHLSFEWLKV. 6 LRR repeats span residues 30 to 58, 178 to 203, 204 to 214, 223 to 250, 296 to 321, and 341 to 366; these read ISDL…VLSK, DCTM…SLKF, CMSLKYLNLSK, IERI…RLRD, TMLK…SLSK, and IIRS…TVYT.

The polypeptide is Putative F-box/LRR-repeat protein At5g02930 (Arabidopsis thaliana (Mouse-ear cress)).